The primary structure comprises 857 residues: MTNEQLQRKHQSLATLITRIIFLVLGLITIGIFIQSYYFSNKIIKQEVMLTKQQTSALVKSLFNNHLSILQIHHDSNSKNEAIRRFFLDGDDEKLEYYFLSMDQADPTHTPEFRFLTTGEGLLWDDGNAHFYGVNEVLLEKISQSVLFGNNWHFMSLHTLMGLRNMLVRRSPVIDTTTGEVLGQYYISVVLDNNFPLVEMLESGSNSDNIVMLVGDKVISHSLSGNEPYDLDSLLAMRDEPSAFDDCLISHTPIEINSTDTLVSILAIQENSHVASLQRQHYLGLATSVVLMLMLSLAIRSWIQNRVANALESLMAYSRFAGTGEKYERFNGSDILEFAHIGHTLENTFEQLESQRRSFQDLFNFALSPMMVWSESGLLIQMNPAAMKELGIEHASPQDFSNPLFQLFKLKLSPHLKMAAQGATLTGINVPIGEKIFRWNLSPIVVENGISGIIVQGQDITTLIDAEKQSNLARREAEQSAKTRADFLAKMSHEIRTPLNGILGIAQLLKRSVNDAENLKQVDVLCNSGEHLLAVLNDILDFSKIEQGKFNIKKRDFNFYDTLNTLENIYRPICREKGVSFEIHNQIPLDCQLHTDQVRLNQIMFNLISNAVKFTPAGRIEVSFKLEQFARSEHSILSIQVSDTGIGIDESKLESIFEPFVQADSLSTREYGGSGLGLTIVKNLVEMLEGEISVQSELCKGSTFYLSIPVEKGECEEQKTPTNPKPEQLFGQGLKVLLVEDNHTNAFILKAFCQKYQMSVEWVQDGTQALEKLKEHAFDLILMDNQLPKMGGIEATREIRETLKLGTPIYACTADAQESTKQEFLSAGANRVIVKPIKEQELHDELLHFKAHYWVEH.

Transmembrane regions (helical) follow at residues 20–40 (IIFL…YYFS) and 283–303 (LGLA…RSWI). The Histidine kinase domain maps to 490–712 (KMSHEIRTPL…TFYLSIPVEK (223 aa)). A Phosphohistidine; by autocatalysis modification is found at His493. One can recognise a Response regulatory domain in the interval 735–850 (KVLLVEDNHT…ELHDELLHFK (116 aa)). 4-aspartylphosphate is present on Asp784.

Binds the complex formed by the autoinducer and LuxP.

It is found in the cell inner membrane. The catalysed reaction is ATP + protein L-histidine = ADP + protein N-phospho-L-histidine.. In terms of biological role, at low cell density, in absence of autoinducer has a kinase activity, and autophosphorylates on a histidine residue. The phosphoryl group is then transferred to an aspartate residue in the response regulator domain. The phosphoryl group is transferred to LuxU, and ultimately to LuxO. At high cell density, in the presence of autoinducer, the kinase activity is inactivated, and the response regulator domain has a phosphatase activity. The protein is Autoinducer 2 sensor kinase/phosphatase LuxQ (luxQ) of Vibrio vulnificus (strain YJ016).